The sequence spans 89 residues: Small ribosomal subunit protein uS15 (89 aa).

Over residues Met-1–Ser-13 the composition is skewed to basic and acidic residues. Positions Met-1–Ser-24 are disordered.

This sequence belongs to the universal ribosomal protein uS15 family. In terms of assembly, part of the 30S ribosomal subunit. Forms a bridge to the 50S subunit in the 70S ribosome, contacting the 23S rRNA.

In terms of biological role, one of the primary rRNA binding proteins, it binds directly to 16S rRNA where it helps nucleate assembly of the platform of the 30S subunit by binding and bridging several RNA helices of the 16S rRNA. Forms an intersubunit bridge (bridge B4) with the 23S rRNA of the 50S subunit in the ribosome. The chain is Small ribosomal subunit protein uS15 from Christiangramia forsetii (strain DSM 17595 / CGMCC 1.15422 / KT0803) (Gramella forsetii).